The following is a 181-amino-acid chain: Trafficking protein particle complex subunit 3 homolog (181 aa).

Residue Cys70 is the site of S-palmitoyl cysteine attachment.

The protein belongs to the TRAPP small subunits family. BET3 subfamily. As to quaternary structure, homodimer. Part of the multisubunit TRAPP (transport protein particle) complex.

The protein localises to the golgi apparatus. The protein resides in the cis-Golgi network. It localises to the endoplasmic reticulum. May play a role in vesicular transport from endoplasmic reticulum to Golgi. Required for the systemic spread of the RNAi response. The protein is Trafficking protein particle complex subunit 3 homolog of Caenorhabditis briggsae.